We begin with the raw amino-acid sequence, 375 residues long: MSDVIALAKDLIRRPSVTPQDEGCQTLMSERLARLGFVIEPMVFEDTTNLWARRGSEGPLFCFAGHTDVVPAGPLEKWHTPPFEPTIQDGVLYGRGAADMKGSLAAMVVAVERFVAEHPDHKGSIAFLITSDEEGPFINGTVRVIDTLEARNEKIRWCIVGEPSSTHVVGDVVKNGRRGSITGDLLVRGVQGHVAYPHLADNPIHKAAPALTELAATVWDEGNAYFPPTSFQIANIQAGTGASNVIPGELQVQFNFRFSTQLTDMDIRERVQALLDKHGLDYELTWTLSGQPFLTDTGALLEATVAAVAAVNGQQPALLTTGGTSDGRFIAPTGAEVIELGPVNATIHKVNECVKAEDLDLLAEMYQGVLERLLA.

Histidine 66 contributes to the Zn(2+) binding site. Residue aspartate 68 is part of the active site. Residue aspartate 99 coordinates Zn(2+). Catalysis depends on glutamate 133, which acts as the Proton acceptor. 3 residues coordinate Zn(2+): glutamate 134, glutamate 162, and histidine 348.

It belongs to the peptidase M20A family. DapE subfamily. As to quaternary structure, homodimer. Zn(2+) is required as a cofactor. It depends on Co(2+) as a cofactor.

It carries out the reaction N-succinyl-(2S,6S)-2,6-diaminopimelate + H2O = (2S,6S)-2,6-diaminopimelate + succinate. The protein operates within amino-acid biosynthesis; L-lysine biosynthesis via DAP pathway; LL-2,6-diaminopimelate from (S)-tetrahydrodipicolinate (succinylase route): step 3/3. Its function is as follows. Catalyzes the hydrolysis of N-succinyl-L,L-diaminopimelic acid (SDAP), forming succinate and LL-2,6-diaminopimelate (DAP), an intermediate involved in the bacterial biosynthesis of lysine and meso-diaminopimelic acid, an essential component of bacterial cell walls. The sequence is that of Succinyl-diaminopimelate desuccinylase from Aeromonas salmonicida (strain A449).